We begin with the raw amino-acid sequence, 375 residues long: Alcohol dehydrogenase 1A (375 aa).

The residue at position 2 (Ser2) is an N-acetylserine. Ser23 carries the post-translational modification Phosphoserine. Cys47 lines the Zn(2+) pocket. NAD(+) is bound at residue 48-52 (GTDDH). Residues His68, Cys98, Cys101, Cys104, Cys112, and Cys175 each coordinate Zn(2+). NAD(+)-binding positions include 200–205 (GLGGVG), Asp224, Lys229, Ile270, 293–295 (VGV), 318–320 (AIL), and Arg370.

It belongs to the zinc-containing alcohol dehydrogenase family. In terms of assembly, dimer of identical or heterodimer of closely related subunits alpha, beta, or gamma that are encoded by genes ADH1A, ADH1B, and ADH1C, respectively. Zn(2+) is required as a cofactor.

Its subcellular location is the cytoplasm. The catalysed reaction is a primary alcohol + NAD(+) = an aldehyde + NADH + H(+). It carries out the reaction a secondary alcohol + NAD(+) = a ketone + NADH + H(+). The enzyme catalyses butan-1-ol + NAD(+) = butanal + NADH + H(+). It catalyses the reaction 1-propanol + NAD(+) = propanal + NADH + H(+). Alcohol dehydrogenase. Oxidizes primary as well as secondary alcohols. Ethanol is a very poor substrate. In Homo sapiens (Human), this protein is Alcohol dehydrogenase 1A (ADH1A).